The chain runs to 159 residues: Ribosomal RNA large subunit methyltransferase H (159 aa).

S-adenosyl-L-methionine contacts are provided by residues G108 and 127-132 (FSKMTF).

This sequence belongs to the RNA methyltransferase RlmH family. Homodimer.

Its subcellular location is the cytoplasm. It catalyses the reaction pseudouridine(1915) in 23S rRNA + S-adenosyl-L-methionine = N(3)-methylpseudouridine(1915) in 23S rRNA + S-adenosyl-L-homocysteine + H(+). Functionally, specifically methylates the pseudouridine at position 1915 (m3Psi1915) in 23S rRNA. In Clostridium beijerinckii (strain ATCC 51743 / NCIMB 8052) (Clostridium acetobutylicum), this protein is Ribosomal RNA large subunit methyltransferase H.